The sequence spans 441 residues: Peroxisomal biogenesis factor 3 (441 aa).

Topologically, residues 1–17 (MAPNQRSRSLLQRHRGK) are peroxisomal. Residues 18–39 (VLISLTGIAALFTTGSVVVFFV) traverse the membrane as a helical segment. Residues 40–441 (KRWLYKQQLR…GVSSSFSFKP (402 aa)) are Cytoplasmic-facing.

This sequence belongs to the peroxin-3 family. Interacts with MSP1; leading to inhibit the translocase activity of MSP1.

It is found in the peroxisome membrane. In terms of biological role, involved in peroxisome biosynthesis. Acts as a regulator of MSP1 by inhibiting the ability of MSP1 to unfold target proteins. This chain is Peroxisomal biogenesis factor 3 (PEX3), found in Saccharomyces cerevisiae (strain ATCC 204508 / S288c) (Baker's yeast).